A 739-amino-acid polypeptide reads, in one-letter code: MEHTYQYAWIIPFLPFPVTISIGLGLLLVPTATKNLRRIWAFFSVLLLSIAMVFSADLAIQQINGSFIYQYSWSWTINNTFSLEFGYLIDPLTSIMLILITTVGIMVLIYSDNYMSHDQGYLRFFAYMSFFNTSMLGLVTSSNLIQIYIFWELVGMCSYLLIGFWFTRPTAANACQKAFVTNRVGDFGLLLGILGLYWITGSFEFRDLFEILKNLIHNNEVNSLFAALCASLLFVGAVAKSAQFPLHVWLPDAMEGPTPISALIHAATMVAAGIFLVARLLPLFTVIPYIMNFISLIGIITVLLGATLALAQRDIKRSLAYSTMSQLGYIMLAPGIGSYRAALFHLITHAYSKALLFLGSGSIIHSMEPIVGYSPEKSQNMILMGGLRRYVPITKTTFFLGTLSLCGMPPLACFWSKDEILNDTWLYSPIFAIIAWSTAGLTAFYMFRVYLLTFDGHLQVHFQNFSSTKNSSFYSISIWGKEVPKPLNVNLFLSTMNTNEKMSFFSKNTYQIDRNGKNRIRYFSTQFGNKYTSMYPHESDNTMLFPMLVLVLFTLFIGFIGIPFDQGVIDLDILSKWLTPSINLLHSNSGDSFDWYEFVTNAIYSVTISFLGIFLAYIFYGSVYSSFQNLDLINSFVRIDSKRILSDRIINGIYNWSYNRGYIDVFYGKVLSNTIRGLAELIHFFDRRVIDGITNGVGVVSFFVGEGIKSVGGGRISSYIFLYAFSVSICLIIYYFFRF.

Helical transmembrane passes span 9–29 (WIIP…LLLV), 39–59 (IWAF…ADLA), 89–109 (IDPL…MVLI), 125–145 (FAYM…SNLI), 147–167 (IYIF…FWFT), 185–205 (GDFG…SFEF), 224–244 (LFAA…SAQF), 258–278 (TPIS…FLVA), 280–300 (LLPL…IGII), 327–347 (LGYI…FHLI), 354–374 (ALLF…VGYS), 396–416 (TTFF…CFWS), 425–445 (WLYS…TAFY), 544–564 (LFPM…GIPF), 603–623 (IYSV…YGSV), and 716–736 (ISSY…IYYF).

The protein belongs to the complex I subunit 5 family. In terms of assembly, NDH is composed of at least 16 different subunits, 5 of which are encoded in the nucleus.

It localises to the plastid. The protein resides in the chloroplast thylakoid membrane. It catalyses the reaction a plastoquinone + NADH + (n+1) H(+)(in) = a plastoquinol + NAD(+) + n H(+)(out). It carries out the reaction a plastoquinone + NADPH + (n+1) H(+)(in) = a plastoquinol + NADP(+) + n H(+)(out). Functionally, NDH shuttles electrons from NAD(P)H:plastoquinone, via FMN and iron-sulfur (Fe-S) centers, to quinones in the photosynthetic chain and possibly in a chloroplast respiratory chain. The immediate electron acceptor for the enzyme in this species is believed to be plastoquinone. Couples the redox reaction to proton translocation, and thus conserves the redox energy in a proton gradient. This chain is NAD(P)H-quinone oxidoreductase subunit 5, chloroplastic (ndhF), found in Acorus calamus (Sweet flag).